The following is a 327-amino-acid chain: Methionyl-tRNA formyltransferase (327 aa).

Residue 121 to 124 (SLLP) coordinates (6S)-5,6,7,8-tetrahydrofolate.

The protein belongs to the Fmt family.

It catalyses the reaction L-methionyl-tRNA(fMet) + (6R)-10-formyltetrahydrofolate = N-formyl-L-methionyl-tRNA(fMet) + (6S)-5,6,7,8-tetrahydrofolate + H(+). Its function is as follows. Attaches a formyl group to the free amino group of methionyl-tRNA(fMet). The formyl group appears to play a dual role in the initiator identity of N-formylmethionyl-tRNA by promoting its recognition by IF2 and preventing the misappropriation of this tRNA by the elongation apparatus. The polypeptide is Methionyl-tRNA formyltransferase (Burkholderia multivorans (strain ATCC 17616 / 249)).